Consider the following 167-residue polypeptide: Ribosome maturation factor RimM (167 aa).

Positions E94–L165 constitute a PRC barrel domain.

Belongs to the RimM family. Binds ribosomal protein uS19.

It localises to the cytoplasm. Functionally, an accessory protein needed during the final step in the assembly of 30S ribosomal subunit, possibly for assembly of the head region. Essential for efficient processing of 16S rRNA. May be needed both before and after RbfA during the maturation of 16S rRNA. It has affinity for free ribosomal 30S subunits but not for 70S ribosomes. In Staphylococcus haemolyticus (strain JCSC1435), this protein is Ribosome maturation factor RimM.